The following is a 122-amino-acid chain: Large ribosomal subunit protein uL14 (122 aa).

It belongs to the universal ribosomal protein uL14 family. As to quaternary structure, part of the 50S ribosomal subunit. Forms a cluster with proteins L3 and L19. In the 70S ribosome, L14 and L19 interact and together make contacts with the 16S rRNA in bridges B5 and B8.

Functionally, binds to 23S rRNA. Forms part of two intersubunit bridges in the 70S ribosome. This Rhizobium meliloti (strain 1021) (Ensifer meliloti) protein is Large ribosomal subunit protein uL14.